The sequence spans 445 residues: MGITILKNEGLDFHARISTPLSEIDDDIQKELLDLTKKVKIAGFRVGKVPVSIVKKKYGTSVRNDIIERRINHSVNHVIKEHNLNIIGRPTIEELQNESDKALEFTVKMELLPKITIPDLKKISLDRPKLEVNSKDVEEQLEKLAALTKNYTKESKAKIKDGDQVTIDAIGYIKEKAFEDGKLNDFKVIIGSNALIPGFEKQLIGSKTGSEVDVNVTFPENYHAKDLAGKDARFVVQIKAVHTAEPTVIDDEFAKKFQSNSLEELRTHFTKQIENESEEAINTIMKMNLFDKLEKLLDFDVPESLLEQEKNILKSGTDKNEQDESLLKDKSSKEITAYYNKLALRRVRIGLLLAEYAKSKNLQLEPDDLRKVIMQQARNFPGQENMIFDFYKNNPRAIEGLKGPALEDKAVQYIFNHEIKLKEKKYTKEELEKYLEAEEQRITLI.

One can recognise a PPIase FKBP-type domain in the interval 162–247 (GDQVTIDAIG…IKAVHTAEPT (86 aa)).

The protein belongs to the FKBP-type PPIase family. Tig subfamily.

The protein resides in the cytoplasm. The enzyme catalyses [protein]-peptidylproline (omega=180) = [protein]-peptidylproline (omega=0). Involved in protein export. Acts as a chaperone by maintaining the newly synthesized protein in an open conformation. Functions as a peptidyl-prolyl cis-trans isomerase. The protein is Trigger factor of Rickettsia africae (strain ESF-5).